We begin with the raw amino-acid sequence, 399 residues long: Argonaute-binding protein 1 (399 aa).

In terms of assembly, component of the argonaute siRNA chaperone (ARC) complex composed of ago1, arb1 and arb2. Interacts with ago1.

The protein localises to the nucleus. Its subcellular location is the cytoplasm. Functionally, component of the argonaute siRNA chaperone (ARC) complex which is required for histone H3K9 methylation, heterochromatin assembly and siRNA generation. The ARC complex contains mostly double-stranded siRNA. Inhibits the release of the siRNA passenger strand from ago1 together with arb2. Inhibits the slicer activity of ago1. Required for swi6 localization to the centromeric repeats. This chain is Argonaute-binding protein 1 (arb1), found in Schizosaccharomyces pombe (strain 972 / ATCC 24843) (Fission yeast).